Consider the following 87-residue polypeptide: Down syndrome critical region protein 10 (87 aa).

In Pan troglodytes (Chimpanzee), this protein is Down syndrome critical region protein 10 (DSCR10).